The following is a 408-amino-acid chain: Argininosuccinate synthase (408 aa).

Residues alanine 11–serine 19 and alanine 38 contribute to the ATP site. L-citrulline contacts are provided by tyrosine 91 and serine 96. Residue glycine 121 participates in ATP binding. 3 residues coordinate L-aspartate: threonine 123, asparagine 127, and aspartate 128. Asparagine 127 contacts L-citrulline. The L-citrulline site is built by arginine 131, serine 182, serine 191, glutamate 267, and tyrosine 279.

It belongs to the argininosuccinate synthase family. Type 1 subfamily. Homotetramer.

It localises to the cytoplasm. It catalyses the reaction L-citrulline + L-aspartate + ATP = 2-(N(omega)-L-arginino)succinate + AMP + diphosphate + H(+). The protein operates within amino-acid biosynthesis; L-arginine biosynthesis; L-arginine from L-ornithine and carbamoyl phosphate: step 2/3. This is Argininosuccinate synthase from Azorhizobium caulinodans (strain ATCC 43989 / DSM 5975 / JCM 20966 / LMG 6465 / NBRC 14845 / NCIMB 13405 / ORS 571).